The chain runs to 245 residues: Caffeoyl-CoA O-methyltransferase (245 aa).

Residue lysine 19 coordinates substrate. S-adenosyl-L-methionine-binding positions include threonine 61, glutamate 83, 85–86 (GV), serine 91, aspartate 109, and alanine 138. Aspartate 161 is a binding site for substrate. Aspartate 161 provides a ligand contact to a divalent metal cation. Aspartate 163 is an S-adenosyl-L-methionine binding site. Positions 187 and 188 each coordinate a divalent metal cation. Asparagine 192 contacts substrate.

It belongs to the class I-like SAM-binding methyltransferase superfamily. Cation-dependent O-methyltransferase family. CCoAMT subfamily. A divalent metal cation is required as a cofactor.

The catalysed reaction is (E)-caffeoyl-CoA + S-adenosyl-L-methionine = (E)-feruloyl-CoA + S-adenosyl-L-homocysteine + H(+). The protein operates within aromatic compound metabolism; phenylpropanoid biosynthesis. In terms of biological role, methylates caffeoyl-CoA to feruloyl-CoA and 5-hydroxyferuloyl-CoA to sinapoyl-CoA. Plays a role in the synthesis of feruloylated polysaccharides. Involved in the reinforcement of the plant cell wall. Also involved in the responding to wounding or pathogen challenge by the increased formation of cell wall-bound ferulic acid polymers. This is Caffeoyl-CoA O-methyltransferase (CCOAOMT) from Zinnia elegans (Garden zinnia).